The sequence spans 400 residues: Protein phosphatase methylesterase 1 (400 aa).

Residues 1–72 (MSDLQRTWAK…NQKLFARPQG (72 aa)) are disordered. Acidic residues predominate over residues 19-28 (PFDEPQEEQG). Low complexity predominate over residues 44–54 (SSASSASSVSS). Residues 55 to 64 (TGTIIPSPNQ) show a composition bias toward polar residues. Residues serine 202, aspartate 228, and histidine 358 contribute to the active site.

Belongs to the AB hydrolase superfamily.

It catalyses the reaction [phosphatase 2A protein]-C-terminal L-leucine methyl ester + H2O = [phosphatase 2A protein]-C-terminal L-leucine + methanol + H(+). In terms of biological role, demethylates proteins that have been reversibly carboxymethylated. Demethylates the phosphatase PP2A catalytic subunit. This Gibberella zeae (strain ATCC MYA-4620 / CBS 123657 / FGSC 9075 / NRRL 31084 / PH-1) (Wheat head blight fungus) protein is Protein phosphatase methylesterase 1 (PPE1).